A 341-amino-acid chain; its full sequence is Methionine import ATP-binding protein MetN 1 (341 aa).

In terms of domain architecture, ABC transporter spans 2–241; sequence IEFRQVSKTF…PKTTIAQNFV (240 aa). ATP is bound at residue 38-45; the sequence is GYSGAGKS.

The protein belongs to the ABC transporter superfamily. Methionine importer (TC 3.A.1.24) family. As to quaternary structure, the complex is composed of two ATP-binding proteins (MetN), two transmembrane proteins (MetI) and a solute-binding protein (MetQ).

The protein localises to the cell membrane. The enzyme catalyses L-methionine(out) + ATP + H2O = L-methionine(in) + ADP + phosphate + H(+). It carries out the reaction D-methionine(out) + ATP + H2O = D-methionine(in) + ADP + phosphate + H(+). Part of the ABC transporter complex MetNIQ involved in methionine import. Responsible for energy coupling to the transport system. This is Methionine import ATP-binding protein MetN 1 from Staphylococcus aureus (strain MW2).